The sequence spans 632 residues: Cleavage stimulation factor subunit 2 tau variant (632 aa).

One can recognise an RRM domain in the interval 16 to 94 (RSVFVGNIPY…RALRVDNAAS (79 aa)). 2 disordered regions span residues 201–296 (IPGK…PGGA) and 365–433 (YMGP…TRPM). The segment covering 213 to 233 (PGGPGPSGPGGPGPGPAPGLC) has biased composition (pro residues). Residues 234–244 (PGPNVMLNQQN) are compositionally biased toward low complexity. Over residues 275–287 (APGPIPAAVPGPG) the composition is skewed to pro residues. The segment covering 365 to 375 (YMGPPHQGPPM) has biased composition (low complexity). Basic and acidic residues-rich tracts occupy residues 377-390 (HGHD…HDMR) and 420-433 (RGGR…TRPM). The 1-1; approximate repeat unit spans residues 428–432 (METRP). Residues 428 to 466 (METRPMETEVLEPRGMERRMETCAMETRGMDARGLEMRG) are 8 X 5 AA tandem repeats of M-E-T-R-[AG]. Residues 433-437 (METEV) form a 1-2; approximate repeat. One copy of the 1-3; approximate repeat lies at 438-442 (LEPRG). One copy of the 1-4; approximate repeat lies at 443–446 (MERR). The stretch at 447 to 451 (METCA) is one 1-5; approximate repeat. The 1-6 repeat unit spans residues 452–456 (METRG). A 1-7; approximate repeat occupies 457–461 (MDARG). A 1-8; approximate repeat occupies 462–466 (LEMRG). One copy of the 2-1; approximate repeat lies at 508–512 (GGTMQ). The segment at 508 to 565 (GGTMQGAGIQGGGMQGAGMQGGGMQGAGMQGGGMQGAGMQAGMQGASMQGGMQGAGMQ) is 12 X 5 AA tandem repeats of G-[AT]-G-[MI]-Q. A 2-2 repeat occupies 513 to 517 (GAGIQ). One copy of the 2-3; approximate repeat lies at 518-522 (GGGMQ). Residues 519–543 (GGMQGAGMQGGGMQGAGMQGGGMQG) are compositionally biased toward gly residues. The tract at residues 519–590 (GGMQGAGMQG…GQSQVTPQDQ (72 aa)) is disordered. A 2-4 repeat occupies 523 to 527 (GAGMQ). One copy of the 2-5; approximate repeat lies at 528–532 (GGGMQ). The 2-6 repeat unit spans residues 533–537 (GAGMQ). The 2-7; approximate repeat unit spans residues 538-542 (GGGMQ). A 2-8 repeat occupies 543–547 (GAGMQ). Residues 544–557 (AGMQAGMQGASMQG) show a composition bias toward low complexity. The stretch at 548 to 551 (AGMQ) is one 2-9; approximate repeat. Residues 552–556 (GASMQ) form a 2-10; approximate repeat. A 2-11; approximate repeat occupies 557-560 (GGMQ). The segment covering 558–574 (GMQGAGMQGASKQGGGQ) has biased composition (gly residues). One copy of the 2-12 repeat lies at 561–565 (GAGMQ). Residues 575 to 584 (PSSFSPGQSQ) show a composition bias toward low complexity. Ser-579 carries the phosphoserine modification.

As to expression, expressed in testes, where it is restricted to pachytene spermatocytes and spermatids, and in the brain (at protein level).

The protein resides in the nucleus. Its function is as follows. May play a significant role in AAUAAA-independent mRNA polyadenylation in germ cells. Directly involved in the binding to pre-mRNAs. The protein is Cleavage stimulation factor subunit 2 tau variant (Cstf2t) of Mus musculus (Mouse).